The chain runs to 548 residues: CTP synthase (548 aa).

Positions 1–276 (MPTELTDYDP…DQYVMEQLGL (276 aa)) are amidoligase domain. Ser-25 is a CTP binding site. Ser-25 contacts UTP. 26–31 (GLGKGI) lines the ATP pocket. Tyr-66 contacts L-glutamine. Asp-83 contacts ATP. Mg(2+)-binding residues include Asp-83 and Glu-151. CTP-binding positions include 158-160 (DIE), 197-202 (KTKPTQ), and Lys-233. UTP is bound by residues 197–202 (KTKPTQ) and Lys-233. The 239-residue stretch at 303–541 (DIALVGKYAM…VETILETTDT (239 aa)) folds into the Glutamine amidotransferase type-1 domain. Gly-363 is a binding site for L-glutamine. Residue Cys-390 is the Nucleophile; for glutamine hydrolysis of the active site. Residues 391 to 394 (LGFQ), Glu-414, and Arg-471 each bind L-glutamine. Residues His-514 and Glu-516 contribute to the active site.

It belongs to the CTP synthase family. As to quaternary structure, homotetramer.

It carries out the reaction UTP + L-glutamine + ATP + H2O = CTP + L-glutamate + ADP + phosphate + 2 H(+). The catalysed reaction is L-glutamine + H2O = L-glutamate + NH4(+). It catalyses the reaction UTP + NH4(+) + ATP = CTP + ADP + phosphate + 2 H(+). It participates in pyrimidine metabolism; CTP biosynthesis via de novo pathway; CTP from UDP: step 2/2. With respect to regulation, allosterically activated by GTP, when glutamine is the substrate; GTP has no effect on the reaction when ammonia is the substrate. The allosteric effector GTP functions by stabilizing the protein conformation that binds the tetrahedral intermediate(s) formed during glutamine hydrolysis. Inhibited by the product CTP, via allosteric rather than competitive inhibition. Functionally, catalyzes the ATP-dependent amination of UTP to CTP with either L-glutamine or ammonia as the source of nitrogen. Regulates intracellular CTP levels through interactions with the four ribonucleotide triphosphates. The polypeptide is CTP synthase (Natronomonas pharaonis (strain ATCC 35678 / DSM 2160 / CIP 103997 / JCM 8858 / NBRC 14720 / NCIMB 2260 / Gabara) (Halobacterium pharaonis)).